The chain runs to 404 residues: Ribosomal RNA large subunit methyltransferase F (404 aa).

Basic residues-rich tracts occupy residues 1-10 (MTKHSQKQNR) and 18-29 (QTRRKKPAGKLK). Disordered stretches follow at residues 1 to 54 (MTKH…HERN), 156 to 177 (GTRQ…QRYK), and 289 to 308 (RAAK…PDAN). Positions 30-54 (AKSEAKLDTRGKPETTEKKGLHERN) are enriched in basic and acidic residues. Over residues 157–172 (TRQNVPYASKPESSAP) the composition is skewed to polar residues.

This sequence belongs to the methyltransferase superfamily. METTL16/RlmF family.

It localises to the cytoplasm. The catalysed reaction is adenosine(1618) in 23S rRNA + S-adenosyl-L-methionine = N(6)-methyladenosine(1618) in 23S rRNA + S-adenosyl-L-homocysteine + H(+). In terms of biological role, specifically methylates the adenine in position 1618 of 23S rRNA. This chain is Ribosomal RNA large subunit methyltransferase F, found in Shewanella sediminis (strain HAW-EB3).